Consider the following 263-residue polypeptide: Fructose-bisphosphate aldolase class 1 (263 aa).

Lys-177 serves as the catalytic Schiff-base intermediate with dihydroxyacetone-P.

It belongs to the DeoC/FbaB aldolase family.

The catalysed reaction is beta-D-fructose 1,6-bisphosphate = D-glyceraldehyde 3-phosphate + dihydroxyacetone phosphate. Has aldolase activity with fructose 1,6-bisphosphate. May play a role in the biosynthesis of aromatic amino acids (AroAA). The sequence is that of Fructose-bisphosphate aldolase class 1 (fba1) from Halobacterium salinarum (strain ATCC 29341 / DSM 671 / R1).